The following is a 466-amino-acid chain: Argininosuccinate lyase 1 (466 aa).

It belongs to the lyase 1 family. Argininosuccinate lyase subfamily.

Its subcellular location is the cytoplasm. It catalyses the reaction 2-(N(omega)-L-arginino)succinate = fumarate + L-arginine. Its pathway is amino-acid biosynthesis; L-arginine biosynthesis; L-arginine from L-ornithine and carbamoyl phosphate: step 3/3. This is Argininosuccinate lyase 1 from Agrobacterium fabrum (strain C58 / ATCC 33970) (Agrobacterium tumefaciens (strain C58)).